A 189-amino-acid chain; its full sequence is Protein sisterless A (189 aa).

Residues 93–124 (DCRGSGSGSGSGSGSDVKDAQRQRAESCRKSR) form a disordered region. The span at 108–121 (DVKDAQRQRAESCR) shows a compositional bias: basic and acidic residues.

Homodimer. Interacts with dpn (via bHLH motif). Interacts with da (via bHLH motif). Interacts with Bap60. In terms of tissue distribution, localizes to all the embryonic nuclei until nuclear cycle 9, when expression ceases in the prepole cell nuclei. Associates with the somatic nuclei through cycle 10. By nuclear cycle 12, distributes uniformly in the somatic portion of the embryo and no longer associates with the nuclei. After early cycle 14 (beginning of cellularization) there is very little or no expression in the periphery of the embryo or in either the somatic or germ cells. In the yolk, accumulates at the nuclei from nuclear cycle 8 until 10-11 hours after fertilization.

It localises to the nucleus. Involved in sex determination and dosage compensation. Required for proper expression of Sxl in embryonic somatic cells. Also has an essential function in the yolk nuclei. Involved in endoderm migration and midgut formation. This Drosophila melanogaster (Fruit fly) protein is Protein sisterless A (sisA).